Consider the following 366-residue polypeptide: Chorismate synthase (366 aa).

The NADP(+) site is built by R48 and R54. Residues 125 to 127, 238 to 239, G278, 293 to 297, and R319 each bind FMN; these read RSS, NA, and KPTSS.

Belongs to the chorismate synthase family. Homotetramer. FMNH2 is required as a cofactor.

The catalysed reaction is 5-O-(1-carboxyvinyl)-3-phosphoshikimate = chorismate + phosphate. The protein operates within metabolic intermediate biosynthesis; chorismate biosynthesis; chorismate from D-erythrose 4-phosphate and phosphoenolpyruvate: step 7/7. Its function is as follows. Catalyzes the anti-1,4-elimination of the C-3 phosphate and the C-6 proR hydrogen from 5-enolpyruvylshikimate-3-phosphate (EPSP) to yield chorismate, which is the branch point compound that serves as the starting substrate for the three terminal pathways of aromatic amino acid biosynthesis. This reaction introduces a second double bond into the aromatic ring system. This Ralstonia pickettii (strain 12J) protein is Chorismate synthase.